A 1045-amino-acid polypeptide reads, in one-letter code: Tyrosine-protein kinase-like otk (1045 aa).

The signal sequence occupies residues 1–25 (MPIVMDMNMLLMLSLAFTVMAPASA). Ig-like C2-type domains follow at residues 26-116 (SSSR…AKLS), 115-200 (LSVI…RVMS), 260-373 (PEGL…APVN), 376-469 (PGAL…VAIN), and 474-564 (PRFS…VRLL). Residues 26 to 587 (SSSRFTQPPQ…AGDGFLVTRA (562 aa)) lie on the Extracellular side of the membrane. Cystine bridges form between Cys-49–Cys-97, Cys-139–Cys-189, Cys-285–Cys-362, and Cys-406–Cys-453. 8 N-linked (GlcNAc...) asparagine glycosylation sites follow: Asn-344, Asn-424, Asn-435, Asn-442, Asn-450, Asn-463, Asn-518, and Asn-530. Residues Cys-496 and Cys-548 are joined by a disulfide bond. A helical transmembrane segment spans residues 588 to 608 (VLITMTVALAYIVLVVGLMLW). Topologically, residues 609–1045 (CRYRRQARKA…LSKAMQAAEK (437 aa)) are cytoplasmic. A disordered region spans residues 628–676 (AGGDQAESGKNTEQEPCLSKQRNGHGKSRTAANGDAQKSDDTACSQQSK). Ser-681 is modified (phosphoserine). Positions 695–1040 (LSELIQIGRG…QLGAALSKAM (346 aa)) constitute a Protein kinase; inactive domain. The segment at 722 to 790 (ASPSDKDADT…QPQEQAQSES (69 aa)) is disordered. Positions 725–736 (SDKDADTEKQHS) are enriched in basic and acidic residues. The segment covering 743-752 (GASGASGCGS) has biased composition (gly residues). Positions 771-782 (DDIEEIKEEEQP) are enriched in acidic residues.

This sequence belongs to the protein kinase superfamily. Tyr protein kinase family. Insulin receptor subfamily. Interacts with plexA; component of a receptor complex that mediates the repulsive signaling in response to Semaphorin ligands.

It is found in the cell membrane. Functionally, acts as a calcium-dependent, homophilic cell adhesion molecule that regulates neural recognition during the development of the nervous system. Component of the repulsive Plexin signaling response to regulate motor axon guidance at the embryonic stage. Also component of a receptor complex that is required in the adult visual system to innervate the lamina layer; specific targeting of R1-R6 axons. In Drosophila mojavensis (Fruit fly), this protein is Tyrosine-protein kinase-like otk.